Here is a 213-residue protein sequence, read N- to C-terminus: Octanoyltransferase (213 aa).

One can recognise a BPL/LPL catalytic domain in the interval 32–207 (ESTLDEIWLV…NILALLNNPD (176 aa)). Substrate is bound by residues 71–78 (RGGQVTYH), 138–140 (SLG), and 151–153 (GLA). The active-site Acyl-thioester intermediate is the cysteine 169.

This sequence belongs to the LipB family.

It is found in the cytoplasm. The enzyme catalyses octanoyl-[ACP] + L-lysyl-[protein] = N(6)-octanoyl-L-lysyl-[protein] + holo-[ACP] + H(+). Its pathway is protein modification; protein lipoylation via endogenous pathway; protein N(6)-(lipoyl)lysine from octanoyl-[acyl-carrier-protein]: step 1/2. Its function is as follows. Catalyzes the transfer of endogenously produced octanoic acid from octanoyl-acyl-carrier-protein onto the lipoyl domains of lipoate-dependent enzymes. Lipoyl-ACP can also act as a substrate although octanoyl-ACP is likely to be the physiological substrate. This Escherichia coli (strain SMS-3-5 / SECEC) protein is Octanoyltransferase.